Consider the following 140-residue polypeptide: Organic hydroperoxide resistance protein-like (140 aa).

Belongs to the OsmC/Ohr family.

The polypeptide is Organic hydroperoxide resistance protein-like (Staphylococcus aureus (strain MRSA252)).